A 435-amino-acid chain; its full sequence is Methionine aminopeptidase 2 (435 aa).

Residues Ala-57 to Ala-77 are disordered. Positions Ala-65–Ala-77 are enriched in basic residues. A substrate-binding site is contributed by His-188. A divalent metal cation-binding residues include Asp-208, Asp-219, and His-288. Residue His-296 participates in substrate binding. A divalent metal cation contacts are provided by Glu-321 and Glu-416.

This sequence belongs to the peptidase M24A family. Methionine aminopeptidase eukaryotic type 2 subfamily. Requires Co(2+) as cofactor. It depends on Zn(2+) as a cofactor. The cofactor is Mn(2+). Fe(2+) serves as cofactor.

It is found in the cytoplasm. The catalysed reaction is Release of N-terminal amino acids, preferentially methionine, from peptides and arylamides.. Cotranslationally removes the N-terminal methionine from nascent proteins. The N-terminal methionine is often cleaved when the second residue in the primary sequence is small and uncharged (Met-Ala-, Cys, Gly, Pro, Ser, Thr, or Val). The protein is Methionine aminopeptidase 2 of Clavispora lusitaniae (strain ATCC 42720) (Yeast).